The primary structure comprises 270 residues: Glucan endo-1,3-beta-glucosidase (270 aa).

The N-terminal stretch at 1–18 (MNAFTFPLLLAFCAFAHG) is a signal peptide. The GH16 domain occupies 22–270 (LDWEDEFNGG…VEYVKKWTWN (249 aa)). Residue Glu-137 is the Nucleophile of the active site. Glu-142 serves as the catalytic Proton donor.

The protein belongs to the glycosyl hydrolase 16 family.

The protein localises to the secreted. The catalysed reaction is Hydrolysis of (1-&gt;3)-beta-D-glucosidic linkages in (1-&gt;3)-beta-D-glucans.. With respect to regulation, ca(2+) does not affect the enzyme activity nor the thermostability. Other cations, such as Mg(2+), Mn(2+), Cu(2+), Zn(2+), Ag(+) or Hg(2+) do not cause any serious adverse effect on the activity. Also no significant change in the activity in response to the addition of 1 mM EDTA. Its function is as follows. Hydrolyzes laminarin majorily to glucose (G1), laminaribiose (L2), laminaritriose (L3), laminaritetraose (L4) and laminaripentaose (L5). Hydrolyzes laminarioligosaccharides L3, L4, L5 and laminarihexaose (L6) to G1, L2 and L3. Hardly hydrolyzes L2. Does not hydrolyze lichenan, pustulan, carboxymethyl cellulose, locust bean gum or soluble starch. This Cryptopygus antarcticus (Antarctic springtail) protein is Glucan endo-1,3-beta-glucosidase.